The following is a 147-amino-acid chain: MGHFTEEDKATITSLWGKVNVEDAGGETLGRLLVVYPWTQRFFDSFGNLSSASAIMGNPKVKAHGKKVLTSLGDAIKHLDDLKGTFAQLSELHCDKLHVDPENFKLLGNVLVTVLAIHFGKEFTPEVQASWQKMVTGVASALSSRYH.

The region spanning 3-147 (HFTEEDKATI…VASALSSRYH (145 aa)) is the Globin domain. Threonine 13 carries the phosphothreonine modification. A phosphoserine mark is found at serine 45, serine 51, and serine 53. Lysine 60 bears the N6-acetyllysine mark. A heme b-binding site is contributed by histidine 64. Lysine 83 bears the N6-acetyllysine mark. Position 93 (histidine 93) interacts with heme b. S-nitrosocysteine is present on cysteine 94. Phosphoserine is present on residues serine 140, serine 143, and serine 144.

The protein belongs to the globin family. As to quaternary structure, heterotetramer of two alpha chains and two gamma chains in fetal hemoglobin (Hb F). As to expression, red blood cells.

Its function is as follows. Gamma chains make up the fetal hemoglobin F, in combination with alpha chains. The chain is Hemoglobin subunit gamma-2 (HBG2) from Gorilla gorilla gorilla (Western lowland gorilla).